We begin with the raw amino-acid sequence, 409 residues long: Arginine deiminase (409 aa).

The Amidino-cysteine intermediate role is filled by Cys-399.

Belongs to the arginine deiminase family.

Its subcellular location is the cytoplasm. The catalysed reaction is L-arginine + H2O = L-citrulline + NH4(+). It functions in the pathway amino-acid degradation; L-arginine degradation via ADI pathway; carbamoyl phosphate from L-arginine: step 1/2. This chain is Arginine deiminase, found in Streptococcus pneumoniae (strain 70585).